The following is a 377-amino-acid chain: Chaperone protein DnaJ (377 aa).

In terms of domain architecture, J spans 5–70; the sequence is DYYQVLGVAK…QKRAAYDQYG (66 aa). A CR-type zinc finger spans residues 137–215; sequence GYDTQIRVPS…CHGAGKTKET (79 aa). Positions 150, 153, 167, 170, 189, 192, 203, and 206 each coordinate Zn(2+). CXXCXGXG motif repeat units lie at residues 150–157, 167–174, 189–196, and 203–210; these read CEICHGSG, CPTCNGSG, CPKCHGTG, and CTHCHGAG.

Belongs to the DnaJ family. Homodimer. Requires Zn(2+) as cofactor.

Its subcellular location is the cytoplasm. In terms of biological role, participates actively in the response to hyperosmotic and heat shock by preventing the aggregation of stress-denatured proteins and by disaggregating proteins, also in an autonomous, DnaK-independent fashion. Unfolded proteins bind initially to DnaJ; upon interaction with the DnaJ-bound protein, DnaK hydrolyzes its bound ATP, resulting in the formation of a stable complex. GrpE releases ADP from DnaK; ATP binding to DnaK triggers the release of the substrate protein, thus completing the reaction cycle. Several rounds of ATP-dependent interactions between DnaJ, DnaK and GrpE are required for fully efficient folding. Also involved, together with DnaK and GrpE, in the DNA replication of plasmids through activation of initiation proteins. This chain is Chaperone protein DnaJ, found in Paraburkholderia phymatum (strain DSM 17167 / CIP 108236 / LMG 21445 / STM815) (Burkholderia phymatum).